The primary structure comprises 201 residues: Peroxiredoxin-2F, mitochondrial (201 aa).

The N-terminal 30 residues, M1 to F30, are a transit peptide targeting the mitochondrion. T37 bears the Phosphothreonine mark. The region spanning T37–I201 is the Thioredoxin domain. C89 (cysteine sulfenic acid (-SOH) intermediate) is an active-site residue. Position 149 is a phosphoserine (S149).

This sequence belongs to the peroxiredoxin family. Prx5 subfamily. Monomer. Expressed in the whole plant.

The protein localises to the mitochondrion matrix. It catalyses the reaction [glutaredoxin]-dithiol + a hydroperoxide = [glutaredoxin]-disulfide + an alcohol + H2O. Its function is as follows. Thiol-specific peroxidase that catalyzes the reduction of hydrogen peroxide and organic hydroperoxides to water and alcohols, respectively. Plays a role in cell protection against oxidative stress by detoxifying peroxides. Reduces preferentially hydrogen peroxide rather than alkyl peroxides. May be involved in mitochondrial redox homeostasis. The chain is Peroxiredoxin-2F, mitochondrial (PRXIIF) from Arabidopsis thaliana (Mouse-ear cress).